The following is a 198-amino-acid chain: Protoplast secreted protein 2 (198 aa).

Positions 1–21 are cleaved as a signal peptide; sequence MPRVAIIIYTLYGHVAATAEA. In terms of domain architecture, Flavodoxin-like spans 22 to 191; it reads EKKGIEAAGG…QVHEIQGKTF (170 aa).

The protein belongs to the WrbA family.

The protein localises to the secreted. This is Protoplast secreted protein 2 (PST2) from Saccharomyces cerevisiae (strain ATCC 204508 / S288c) (Baker's yeast).